The sequence spans 369 residues: H-2 class I histocompatibility antigen, K-B alpha chain (369 aa).

The N-terminal stretch at 1-21 is a signal peptide; the sequence is MVPCTLLLLLAAALAPTQTRA. The tract at residues 22–111 is alpha-1; that stretch reads GPHSLRYFVT…LLGYYNQSKG (90 aa). Residues 22 to 305 lie on the Extracellular side of the membrane; sequence GPHSLRYFVT…EPPPSTVSNM (284 aa). A glycan (N-linked (GlcNAc...) asparagine) is linked at Asn-107. The interval 112–203 is alpha-2; it reads GSHTIQVISG…KNGNATLLRT (92 aa). Cysteines 122 and 185 form a disulfide. N-linked (GlcNAc...) asparagine glycosylation is present at Asn-197. Positions 204-295 are alpha-3; it reads DSPKAHVTHH…GLPEPLTLRW (92 aa). Residues 206-294 form the Ig-like C1-type domain; the sequence is PKAHVTHHSR…QGLPEPLTLR (89 aa). Cys-224 and Cys-280 are joined by a disulfide. A connecting peptide region spans residues 296 to 305; it reads EPPPSTVSNM. Residues 306-328 form a helical membrane-spanning segment; it reads ATVAVLVVLGAAIVTGAVVAFVM. Residues 329–369 lie on the Cytoplasmic side of the membrane; that stretch reads KMRRRNTGGKGGDYALAPGSQTSDLSLPDCKVMVHDPHSLA. Phosphoserine is present on residues Ser-351 and Ser-354.

It belongs to the MHC class I family. Heterodimer of an alpha chain and a beta chain (beta-2-microglobulin).

It is found in the membrane. Functionally, involved in the presentation of foreign antigens to the immune system. The protein is H-2 class I histocompatibility antigen, K-B alpha chain (H2-K1) of Mus musculus (Mouse).